The sequence spans 499 residues: UDP-N-acetylmuramoylalanine--D-glutamate ligase (499 aa).

120–126 (GTNGKTT) provides a ligand contact to ATP.

This sequence belongs to the MurCDEF family.

It localises to the cytoplasm. The catalysed reaction is UDP-N-acetyl-alpha-D-muramoyl-L-alanine + D-glutamate + ATP = UDP-N-acetyl-alpha-D-muramoyl-L-alanyl-D-glutamate + ADP + phosphate + H(+). It participates in cell wall biogenesis; peptidoglycan biosynthesis. Functionally, cell wall formation. Catalyzes the addition of glutamate to the nucleotide precursor UDP-N-acetylmuramoyl-L-alanine (UMA). The chain is UDP-N-acetylmuramoylalanine--D-glutamate ligase from Nostoc punctiforme (strain ATCC 29133 / PCC 73102).